The following is a 328-amino-acid chain: Stress response kinase A (328 aa).

The active-site Proton acceptor is the aspartate 201. 2 residues coordinate Mg(2+): asparagine 206 and aspartate 217. Residue aspartate 217 is part of the active site.

The protein belongs to the SrkA/RdoA protein kinase family. Monomer. It depends on Mg(2+) as a cofactor.

The protein localises to the cytoplasm. It carries out the reaction L-seryl-[protein] + ATP = O-phospho-L-seryl-[protein] + ADP + H(+). The catalysed reaction is L-threonyl-[protein] + ATP = O-phospho-L-threonyl-[protein] + ADP + H(+). Functionally, a protein kinase that phosphorylates Ser and Thr residues. Probably acts to suppress the effects of stress linked to accumulation of reactive oxygen species. Probably involved in the extracytoplasmic stress response. The chain is Stress response kinase A from Escherichia coli O6:H1 (strain CFT073 / ATCC 700928 / UPEC).